The primary structure comprises 387 residues: MATREACGQFAAASAAMAAASSQNPSKATMTDPRFRIRPLQQVASACTGAMVTACFMTPLDVIKTRLQAQQQALLSNKCFLYCNGLMDHICPCGPDTPNPAAAKPAPRFSGTIDAFIKISRTEGIGSLWSGLSPTLISALPSTIIYFVAYEQFKARFTDIHYKYTRRPDTIAHDIPHPIPFLVPLLAGVSGRILAVTCVSPVELIRTKMQSQRMTHAEMFGTIRQVVQSQGVLGLWRGLPPTILRDVPFSGIYWTCYEYLKSSFGVVEPTFSFSFAAGAISGSVAATITTPFDVVKTHEQIEFGEKFIFSDNPPKQVATKSVAMRLASIYRMGGVPAIFSGLGPRLFKVAPACAIMISSFEYGKSFFYHYNIDQHNRSNQATKGPGS.

3 Solcar repeats span residues 37 to 156, 179 to 263, and 269 to 366; these read IRPL…FKAR, IPFL…LKSS, and PTFS…GKSF. The next 6 helical transmembrane spans lie at 43-63, 128-148, 179-199, 235-255, 275-295, and 337-357; these read VASA…LDVI, LWSG…IYFV, IPFL…VTCV, LWRG…IYWT, FAAG…FDVV, and AIFS…AIMI.

It belongs to the mitochondrial carrier (TC 2.A.29) family.

The protein localises to the mitochondrion inner membrane. Functionally, mitochondrial transporter required for glutathione import into mitochondria. In Drosophila melanogaster (Fruit fly), this protein is Solute carrier family 25 protein Shawn.